Consider the following 487-residue polypeptide: MNKPLKILLVSPEVAPLAKTGGLADVAGSLPKALAAKGHEVRVAMPRYRQVKEVNYLTDLPVEMDGSLETAVIRQGKLPGEAGIPVYLIDNYKFFYRDGMYGYGDDAARFNFFCKAVLSMLPWLEFQPDIIHCNDWQTGPIPLFLKVKHEDNPFYRETATIYTIHNLQYQGTFPRNILKTMALSEEFFVPERLEFYGQVSYMKAGILYADLVNTVSKKYALEIQTPEYGERLDGLLRKRAADLRGILNGIDYEEFDPATDRRLAVNYDADHLEKKGENKAALQREMELPVRDVPVLGLISRLVSQKGLDLLAAILDPLMQQDLQFVLLGSGEDYYQQLFSRYKVKYRDKMAVKIGFDPVLAQHIYAGCDIFLMPSRFEPCGLGQMISLRYGAVPVVRATGGLEDTIKDLHQYPGVGNGFTFRDYQPQALLDTINRALHVYRHEPGEWRKLMRRGMAADFSWSASAGHYEEMYREALEKRRAAMFKVG.

Residue K19 participates in ADP-alpha-D-glucose binding.

This sequence belongs to the glycosyltransferase 1 family. Bacterial/plant glycogen synthase subfamily.

It carries out the reaction [(1-&gt;4)-alpha-D-glucosyl](n) + ADP-alpha-D-glucose = [(1-&gt;4)-alpha-D-glucosyl](n+1) + ADP + H(+). The protein operates within glycan biosynthesis; glycogen biosynthesis. In terms of biological role, synthesizes alpha-1,4-glucan chains using ADP-glucose. The polypeptide is Glycogen synthase (Moorella thermoacetica (strain ATCC 39073 / JCM 9320)).